The primary structure comprises 392 residues: 8-amino-7-oxononanoate synthase 1 (392 aa).

Pyridoxal 5'-phosphate is bound at residue 109 to 110 (GF). A substrate-binding site is contributed by His134. Residues Ser181, 206 to 209 (DDAH), and 237 to 240 (TLSK) each bind pyridoxal 5'-phosphate. Lys240 carries the N6-(pyridoxal phosphate)lysine modification. A substrate-binding site is contributed by Thr354.

It belongs to the class-II pyridoxal-phosphate-dependent aminotransferase family. BioF subfamily. In terms of assembly, homodimer. The cofactor is pyridoxal 5'-phosphate.

It catalyses the reaction 6-carboxyhexanoyl-[ACP] + L-alanine + H(+) = (8S)-8-amino-7-oxononanoate + holo-[ACP] + CO2. It participates in cofactor biosynthesis; biotin biosynthesis. Functionally, catalyzes the decarboxylative condensation of pimeloyl-[acyl-carrier protein] and L-alanine to produce 8-amino-7-oxononanoate (AON), [acyl-carrier protein], and carbon dioxide. The sequence is that of 8-amino-7-oxononanoate synthase 1 (kbl) from Bacillus subtilis (strain 168).